The chain runs to 161 residues: Allophycocyanin alpha chain (161 aa).

Residue asparagine 71 is modified to N4-methylasparagine. Residue cysteine 81 coordinates (2R,3E)-phycocyanobilin.

The protein belongs to the phycobiliprotein family. In terms of assembly, component of the phycobilisome. Heterodimer of an alpha and a beta chain. Contains one covalently linked phycocyanobilin chromophore.

It localises to the cellular thylakoid membrane. Functionally, light-harvesting photosynthetic bile pigment-protein from the phycobiliprotein complex. Allophycocyanin has a maximum absorption at approximately 650 nanometers. The sequence is that of Allophycocyanin alpha chain (apcA) from Arthrospira platensis (Spirulina platensis).